Consider the following 344-residue polypeptide: L-rhamnose-proton symporter (344 aa).

Transmembrane regions (helical) follow at residues 4-24 (AITM…CFYA), 38-58 (WSVG…ALLL), 68-88 (FNLS…IGNI), 101-121 (MGIG…TPII), 131-151 (TEGG…VGIV), 175-195 (LLLA…MNAA), 214-234 (LPSY…FCFI), 259-279 (ILLS…YAWG), 290-310 (MSWM…GLVL), and 321-341 (VAVL…VGLG).

Belongs to the L-rhamnose transporter (TC 2.A.7.6) family.

The protein localises to the cell inner membrane. The enzyme catalyses L-rhamnopyranose(in) + H(+)(in) = L-rhamnopyranose(out) + H(+)(out). Functionally, uptake of L-rhamnose across the cytoplasmic membrane with the concomitant transport of protons into the cell (symport system). The chain is L-rhamnose-proton symporter from Salmonella typhi.